The primary structure comprises 713 residues: Glutamine--fructose-6-phosphate aminotransferase [isomerizing] (713 aa).

Cys-2 functions as the For GATase activity in the catalytic mechanism. Residues 2–316 (CGIFGYVNFL…DDDIAHIYDG (315 aa)) form the Glutamine amidotransferase type-2 domain. 2 consecutive SIS domains span residues 389–528 (WLST…DSIS) and 561–703 (CNSS…VDFP).

As to quaternary structure, homotetramer.

The enzyme catalyses D-fructose 6-phosphate + L-glutamine = D-glucosamine 6-phosphate + L-glutamate. Its pathway is nucleotide-sugar biosynthesis; UDP-N-acetyl-alpha-D-glucosamine biosynthesis; alpha-D-glucosamine 6-phosphate from D-fructose 6-phosphate: step 1/1. Functionally, involved in amino sugar synthesis (formation of chitin, supplies the amino sugars of asparagine-linked oligosaccharides of glycoproteins). The polypeptide is Glutamine--fructose-6-phosphate aminotransferase [isomerizing] (GFA1) (Candida albicans (strain SC5314 / ATCC MYA-2876) (Yeast)).